The following is a 259-amino-acid chain: Tumor necrosis factor receptor superfamily member 10C (259 aa).

Residues 1–25 (MARIPKTLKFVVVIVAVLLPVLAYS) form the signal peptide. TNFR-Cys repeat units lie at residues 29–66 (ARQEEVPQQTVAPQQQRHSFKGEECPAGSHRSEHTGAC), 69–109 (CTEG…DTVC), and 110–149 (QCKEGTFRNENSPEMCRKCSRCPSGEVQVSNCTSWDDIQC). Residues 30–45 (RQEEVPQQTVAPQQQR) show a composition bias toward polar residues. Residues 30-56 (RQEEVPQQTVAPQQQRHSFKGEECPAG) form a disordered region. 7 cysteine pairs are disulfide-bonded: C53–C66, C69–C85, C88–C101, C91–C109, C111–C125, C128–C141, and C131–C149. An N-linked (GlcNAc...) (high mannose) asparagine glycan is attached at N77. N140 and N156 each carry an N-linked (GlcNAc...) (high mannose) asparagine glycan. A disordered region spans residues 160 to 224 (ETPAAEETMN…TSPGTPAPAA (65 aa)). TAPE repeat units lie at residues 162-176 (PAAEETMNTSPGTPA), 177-191 (PAAEETMNTSPGTPA), 192-206 (PAAEETMTTSPGTPA), 207-221 (PAAEETMTTSPGTPA), and 222-236 (PAAEETMITSPGTPA). Over residues 185–217 (TSPGTPAPAAEETMTTSPGTPAPAAEETMTTSP) the composition is skewed to low complexity. A236 carries GPI-anchor amidated alanine lipidation. The propeptide at 237–259 (SSHYLSCTIVGIIVLIVLLIVFV) is removed in mature form.

N-glycosylated and O-glycosylated. In terms of tissue distribution, higher expression in normal tissues than in tumor cell lines. Highly expressed in peripheral blood lymphocytes, spleen, skeletal muscle, placenta, lung and heart.

Its subcellular location is the cell membrane. Functionally, receptor for the cytotoxic ligand TRAIL. Lacks a cytoplasmic death domain and hence is not capable of inducing apoptosis. May protect cells against TRAIL mediated apoptosis by competing with TRAIL-R1 and R2 for binding to the ligand. The chain is Tumor necrosis factor receptor superfamily member 10C (TNFRSF10C) from Homo sapiens (Human).